The chain runs to 466 residues: Citrate synthase, mitochondrial (466 aa).

The N-terminal 27 residues, 1 to 27, are a transit peptide targeting the mitochondrion; sequence MALLTAAARLLGAKNSSCLVLAARHAS. An SIFI-degron motif is present at residues 2–21; sequence ALLTAAARLLGAKNSSCLVL. Lys57 is modified (N6-succinyllysine). At Lys76 the chain carries N6-acetyllysine; alternate. Lys76 is modified (N6-succinyllysine; alternate). 2 positions are modified to N6-succinyllysine: Lys103 and Lys193. At Ser226 the chain carries Phosphoserine. The active site involves His301. N6-acetyllysine; alternate is present on residues Lys321 and Lys327. An N6-succinyllysine; alternate mark is found at Lys321 and Lys327. The active site involves His347. An oxaloacetate-binding site is contributed by Arg356. Lys375 bears the N6-acetyllysine; alternate mark. Lys375 bears the N6-succinyllysine; alternate mark. Lys382 bears the N6-acetyllysine mark. Lys393 bears the N6-acetyllysine; alternate mark. N6-succinyllysine; alternate is present on Lys393. Lys395 bears the N6,N6,N6-trimethyllysine mark. Residue Asp402 is part of the active site. Oxaloacetate contacts are provided by Arg428 and Arg448. Residue Lys450 is modified to N6-succinyllysine. At Lys459 the chain carries N6-acetyllysine; alternate. Position 459 is an N6-succinyllysine; alternate (Lys459).

Belongs to the citrate synthase family. As to quaternary structure, homodimer. Post-translationally, methylated. Trimethylation at Lys-395 by CSKMT decreases citrate synthase activity. In terms of processing, in response to mitochondrial stress, the precursor protein is ubiquitinated by the SIFI complex in the cytoplasm before mitochondrial import, leading to its degradation. Within the SIFI complex, UBR4 initiates ubiquitin chain that are further elongated or branched by KCMF1. Expressed in the head region and flagellum of epididymal sperm.

It is found in the mitochondrion matrix. It catalyses the reaction oxaloacetate + acetyl-CoA + H2O = citrate + CoA + H(+). It functions in the pathway carbohydrate metabolism; tricarboxylic acid cycle; isocitrate from oxaloacetate: step 1/2. Functionally, key enzyme of the Krebs tricarboxylic acid cycle which catalyzes the synthesis of citrate from acetyl coenzyme A and oxaloacetate. This Rattus norvegicus (Rat) protein is Citrate synthase, mitochondrial (Cs).